A 590-amino-acid chain; its full sequence is Oligoendopeptidase F homolog (590 aa).

His-381 is a binding site for Zn(2+). Residue Glu-382 is part of the active site. Zn(2+)-binding residues include His-385 and His-388.

The protein belongs to the peptidase M3B family. It depends on Zn(2+) as a cofactor.

The protein is Oligoendopeptidase F homolog (pepF) of Borreliella burgdorferi (strain ATCC 35210 / DSM 4680 / CIP 102532 / B31) (Borrelia burgdorferi).